A 396-amino-acid chain; its full sequence is Ornithine aminotransferase 2 (396 aa).

K255 is modified (N6-(pyridoxal phosphate)lysine).

It belongs to the class-III pyridoxal-phosphate-dependent aminotransferase family. OAT subfamily. Requires pyridoxal 5'-phosphate as cofactor.

The protein resides in the cytoplasm. The catalysed reaction is a 2-oxocarboxylate + L-ornithine = L-glutamate 5-semialdehyde + an L-alpha-amino acid. Its pathway is amino-acid biosynthesis; L-proline biosynthesis; L-glutamate 5-semialdehyde from L-ornithine: step 1/1. In terms of biological role, catalyzes the interconversion of ornithine to glutamate semialdehyde. This Staphylococcus saprophyticus subsp. saprophyticus (strain ATCC 15305 / DSM 20229 / NCIMB 8711 / NCTC 7292 / S-41) protein is Ornithine aminotransferase 2.